The following is a 265-amino-acid chain: Hydroxyethylthiazole kinase 2 (265 aa).

M39 serves as a coordination point for substrate. ATP is bound by residues K115 and T168. G195 contacts substrate.

The protein belongs to the Thz kinase family. Mg(2+) is required as a cofactor.

It carries out the reaction 5-(2-hydroxyethyl)-4-methylthiazole + ATP = 4-methyl-5-(2-phosphooxyethyl)-thiazole + ADP + H(+). The protein operates within cofactor biosynthesis; thiamine diphosphate biosynthesis; 4-methyl-5-(2-phosphoethyl)-thiazole from 5-(2-hydroxyethyl)-4-methylthiazole: step 1/1. Catalyzes the phosphorylation of the hydroxyl group of 4-methyl-5-beta-hydroxyethylthiazole (THZ). The sequence is that of Hydroxyethylthiazole kinase 2 from Clostridium botulinum (strain Okra / Type B1).